The chain runs to 93 residues: MYTIDLILRHVPMPVSIERKESAAAMAVYQQIQQAMASGTPTFLELTCDRQVGKKLTVLTSEIVAVQMADKDAPSSTISRGGFFAQLVQQTSN.

It belongs to the UPF0367 family.

The protein is UPF0367 protein tsr0804 of Thermosynechococcus vestitus (strain NIES-2133 / IAM M-273 / BP-1).